Here is a 294-residue protein sequence, read N- to C-terminus: 2,4-diacetylphloroglucinol hydrolase (294 aa).

Positions 129, 160, 270, and 274 each coordinate Zn(2+).

This sequence belongs to the DAPG/phloretin hydrolase family. As to quaternary structure, homodimer. The cofactor is Zn(2+).

The catalysed reaction is 2,4-diacetylphloroglucinol + H2O = 2-acetylphloroglucinol + acetate. Specifically and significantly activated by CoCl(2). Competitively inhibited by MAPG, but not by 2-hydroxy- and 4-hydroxyacetophenone. In terms of biological role, hydrolase that specifically degrades the potent antimicrobial compound 2,4-diacetylphloroglucinol (DAPG) to equimolar amounts of mildly toxic monoacetylphloroglucinol (MAPG) and acetate. The protein is 2,4-diacetylphloroglucinol hydrolase of Pseudomonas sp.